Reading from the N-terminus, the 156-residue chain is Small ribosomal subunit protein uS7 (156 aa).

Belongs to the universal ribosomal protein uS7 family. As to quaternary structure, part of the 30S ribosomal subunit. Contacts proteins S9 and S11.

Its function is as follows. One of the primary rRNA binding proteins, it binds directly to 16S rRNA where it nucleates assembly of the head domain of the 30S subunit. Is located at the subunit interface close to the decoding center, probably blocks exit of the E-site tRNA. The chain is Small ribosomal subunit protein uS7 from Shewanella frigidimarina (strain NCIMB 400).